The sequence spans 115 residues: Evasin P1182 (115 aa).

The first 26 residues, 1-26, serve as a signal peptide directing secretion; the sequence is MALNWSFRVIFVSTMWCALLKFATLG. Disulfide bonds link Cys38–Cys58, Cys54–Cys94, Cys70–Cys99, and Cys89–Cys108. N-linked (GlcNAc...) asparagine glycosylation is found at Asn45, Asn72, and Asn103.

The protein localises to the secreted. Salivary chemokine-binding protein which binds to host chemokines CCL2, CCL3, CCL4, CCL8 and CCL18. The polypeptide is Evasin P1182 (Amblyomma maculatum (Gulf Coast tick)).